A 372-amino-acid chain; its full sequence is Solute carrier family 35 member F6 (372 aa).

An N-terminal signal peptide occupies residues 1-18 (MAWTKYQLFLAGLMLVTG). Transmembrane regions (helical) follow at residues 48 to 68 (FVQA…FYLL) and 89 to 109 (LLFL…YVAL). One can recognise an EamA domain in the interval 105 to 160 (MYVALNMTSASSFQMLRGAVIIFTGLFSVAFLDRRLVPSQWLGILITIAGLVVVGL). N-linked (GlcNAc...) asparagine glycosylation is present at N110. The next 7 helical transmembrane spans lie at 116 to 136 (SFQM…VAFL), 145 to 165 (WLGI…DLLS), 176 to 196 (VITG…QMVL), 211 to 231 (AVGI…VPMY), 261 to 281 (LIAL…FSGI), 293 to 312 (MVLD…ALGW), and 320 to 336 (ILGF…YNGL). A Phosphothreonine modification is found at T366.

This sequence belongs to the SLC35F solute transporter family. In terms of assembly, interacts with SLC25A5.

The protein resides in the mitochondrion. It is found in the lysosome membrane. Functionally, involved in the maintenance of mitochondrial membrane potential in pancreatic ductal adenocarcinoma (PDAC) cells. Promotes pancreatic ductal adenocarcinoma (PDAC) cell growth. May play a role as a nucleotide-sugar transporter. The sequence is that of Solute carrier family 35 member F6 (Slc35f6) from Rattus norvegicus (Rat).